The sequence spans 152 residues: Large ribosomal subunit protein uL15 (152 aa).

A compositionally biased stretch (polar residues) spans 1-12; the sequence is MTSTLNTLKSNT. The interval 1-57 is disordered; that stretch reads MTSTLNTLKSNTGSRKKKLRKGRGIAAGQGASCGFGMRGQKSRSGRPTRPGFEGGQM. Residues 14–23 are compositionally biased toward basic residues; the sequence is SRKKKLRKGR. Residues 25–37 are compositionally biased toward gly residues; it reads IAAGQGASCGFGM.

Belongs to the universal ribosomal protein uL15 family. In terms of assembly, part of the 50S ribosomal subunit.

Its function is as follows. Binds to the 23S rRNA. The polypeptide is Large ribosomal subunit protein uL15 (Prochlorococcus marinus subsp. pastoris (strain CCMP1986 / NIES-2087 / MED4)).